The sequence spans 124 residues: Aspartate 1-decarboxylase (124 aa).

Serine 25 (schiff-base intermediate with substrate; via pyruvic acid) is an active-site residue. Pyruvic acid (Ser) is present on serine 25. Residue threonine 57 coordinates substrate. Catalysis depends on tyrosine 58, which acts as the Proton donor. Substrate is bound at residue 73-75 (GAA).

Belongs to the PanD family. As to quaternary structure, heterooctamer of four alpha and four beta subunits. Pyruvate serves as cofactor. Is synthesized initially as an inactive proenzyme, which is activated by self-cleavage at a specific serine bond to produce a beta-subunit with a hydroxyl group at its C-terminus and an alpha-subunit with a pyruvoyl group at its N-terminus.

Its subcellular location is the cytoplasm. It carries out the reaction L-aspartate + H(+) = beta-alanine + CO2. Its pathway is cofactor biosynthesis; (R)-pantothenate biosynthesis; beta-alanine from L-aspartate: step 1/1. Functionally, catalyzes the pyruvoyl-dependent decarboxylation of aspartate to produce beta-alanine. The chain is Aspartate 1-decarboxylase from Syntrophobacter fumaroxidans (strain DSM 10017 / MPOB).